We begin with the raw amino-acid sequence, 93 residues long: Acylphosphatase (93 aa).

One can recognise an Acylphosphatase-like domain in the interval 4 to 91 (TLHLVIHGRV…PAGTGFRVAA (88 aa)). Residues Arg19 and Asn37 contribute to the active site.

It belongs to the acylphosphatase family.

It carries out the reaction an acyl phosphate + H2O = a carboxylate + phosphate + H(+). This Azorhizobium caulinodans (strain ATCC 43989 / DSM 5975 / JCM 20966 / LMG 6465 / NBRC 14845 / NCIMB 13405 / ORS 571) protein is Acylphosphatase (acyP).